The primary structure comprises 387 residues: Formate-dependent phosphoribosylglycinamide formyltransferase (387 aa).

N(1)-(5-phospho-beta-D-ribosyl)glycinamide-binding positions include 12–13 (EL) and Glu-72. ATP is bound by residues Arg-104, Lys-145, 150–155 (SSGKGQ), 185–188 (EEFI), and Glu-193. One can recognise an ATP-grasp domain in the interval 109–300 (DLAAKDLKLL…EFELHIRAIL (192 aa)). Mg(2+) contacts are provided by Glu-258 and Glu-270. N(1)-(5-phospho-beta-D-ribosyl)glycinamide-binding positions include Asp-277, Lys-348, and 355-356 (RR).

The protein belongs to the PurK/PurT family. As to quaternary structure, homodimer.

It catalyses the reaction N(1)-(5-phospho-beta-D-ribosyl)glycinamide + formate + ATP = N(2)-formyl-N(1)-(5-phospho-beta-D-ribosyl)glycinamide + ADP + phosphate + H(+). It participates in purine metabolism; IMP biosynthesis via de novo pathway; N(2)-formyl-N(1)-(5-phospho-D-ribosyl)glycinamide from N(1)-(5-phospho-D-ribosyl)glycinamide (formate route): step 1/1. Functionally, involved in the de novo purine biosynthesis. Catalyzes the transfer of formate to 5-phospho-ribosyl-glycinamide (GAR), producing 5-phospho-ribosyl-N-formylglycinamide (FGAR). Formate is provided by PurU via hydrolysis of 10-formyl-tetrahydrofolate. This is Formate-dependent phosphoribosylglycinamide formyltransferase from Leptospira borgpetersenii serovar Hardjo-bovis (strain JB197).